Consider the following 777-residue polypeptide: Intraflagellar transport protein 80 homolog (777 aa).

7 WD repeats span residues 12–50 (KHQELVSCVGWTTAEELYSCSDDHQIVKWNLLTSETSLI), 104–143 (AHCGAVLAGRWNYEGTALVTVGEDGQVKIWSKTGMLRSTL), 145–185 (QQGI…LQWK), 186–225 (AHDGIILKVDWNSVNDLILSAGEDCKYKVWDSYGRVLYGS), 227–265 (PHEHPITSVAWAPDGELFAVGSFHTLRLCDKTGWSYALE), 267–306 (PNTGSIFNIAWSIDGTQIAGACGNGHVVFAHVVEQRWEWK), and 504–542 (KLGTMVHTLAWCDTCNILCGLQDTRFTVWYYPNAVYVDR). The segment at 758–777 (TKERDRSSSGQSSKNTGLKP) is disordered. A compositionally biased stretch (polar residues) spans 765 to 777 (SSGQSSKNTGLKP).

In terms of assembly, component of the IFT complex B, at least composed of IFT20, IFT22, IFT25, IFT27, IFT46, IFT52, TRAF3IP1/IFT54, IFT57, IFT74, IFT80, IFT81, and IFT88. Interacts with IFT88. Interacts with IFT57 and IFT70B.

Its subcellular location is the cytoplasm. The protein resides in the cytoskeleton. The protein localises to the cilium basal body. It localises to the cilium axoneme. Its function is as follows. Component of the intraflagellar transport (IFT) complex B, which is essential for the development and maintenance of motile and sensory cilia. This is Intraflagellar transport protein 80 homolog (Ift80) from Rattus norvegicus (Rat).